The sequence spans 183 residues: DELTA-miturgitoxin-Cp1c (183 aa).

The first 20 residues, 1-20, serve as a signal peptide directing secretion; it reads MKFSLFFSVFFLAVLHACLS. Residues 21–47 constitute a propeptide that is removed on maturation; sequence ESEIDLEDEEHFMSSDSFLSEIQDESR. The Processing quadruplet motif signature appears at 44 to 47; that stretch reads DESR. 8 disulfide bridges follow: cysteine 51–cysteine 66, cysteine 58–cysteine 75, cysteine 65–cysteine 88, cysteine 77–cysteine 86, cysteine 115–cysteine 130, cysteine 122–cysteine 139, cysteine 129–cysteine 157, and cysteine 141–cysteine 155. The interval 164-177 is predicted alpha-helix; the sequence is QAIEGALRIAKKLI. The residue at position 181 (tryptophan 181) is a Tryptophan amide.

It belongs to the neurotoxin 19 (CSTX) family. Double-CSTX subfamily. Post-translationally, cleavage of the propeptide depends on the processing quadruplet motif (XXXR, with at least one of X being E). In terms of tissue distribution, expressed by the venom gland.

The protein localises to the secreted. It localises to the target cell membrane. Its function is as follows. Spider venom toxin that exhibits cytolytic activity by forming an alpha-helix across the membrane. Lethal to insect larvae. Causes instant paralysis and death in the larvae of the flesh fly (S.carnaria) at doses of 20 ug/g, at doses of less than 10 ug/g causes reversible paralysis. Has cytolytic activity against insect Sf9 cells. Causes stable and irreversible depolarization of fly muscle fibers, leading to contracture at higher toxin concentrations. Destabilizes membranes. In Cheiracanthium punctorium (Yellow sac spider), this protein is DELTA-miturgitoxin-Cp1c.